Reading from the N-terminus, the 472-residue chain is SURF6 homolog gldi-11 (472 aa).

Disordered stretches follow at residues 53–73 (LSKK…AKGL), 89–232 (KSKQ…SPEI), 249–350 (KVER…DRAL), and 414–472 (LVKK…GRIL). Over residues 95–106 (KVQPQKVVAPVK) the composition is skewed to low complexity. Residues 107 to 132 (RPADQNKNKEKVVKKDQKKQDKKADS) show a composition bias toward basic and acidic residues. Over residues 133 to 150 (DSEEDDSSDDEEKEETDE) the composition is skewed to acidic residues. Positions 151 to 160 (PVAKKQKKEE) are enriched in basic and acidic residues. Acidic residues-rich tracts occupy residues 161 to 175 (SSDD…EEPE) and 182 to 194 (EAED…EEEE). Polar residues predominate over residues 197–210 (SKPNKTVAQSTLKS). Basic and acidic residues predominate over residues 212–221 (GKIDKEIQKL). The span at 274 to 285 (LKRRESKLKLKQ) shows a compositional bias: basic residues. A compositionally biased stretch (basic and acidic residues) spans 286-305 (RRAEEKKGKEAAAQVKKETV). Basic residues predominate over residues 414 to 426 (LVKKNKMKDRRKQ). Over residues 427–443 (KWENRENKTEGEKQTKQ) the composition is skewed to basic and acidic residues. Residues 459–472 (KRKMNKLRNKGRIL) are compositionally biased toward basic residues.

This sequence belongs to the SURF6 family.

Its subcellular location is the nucleus. The protein localises to the nucleoplasm. Functionally, binds to both DNA and RNA in vitro, with a stronger binding capacity for RNA. May represent a nucleolar constitutive protein involved in ribosomal biosynthesis or assembly. The protein is SURF6 homolog gldi-11 of Caenorhabditis elegans.